A 399-amino-acid chain; its full sequence is Phosphoglycerate kinase (399 aa).

Residues 22-24 (DFN), Arg38, 61-64 (HLGR), Arg120, and Arg153 each bind substrate. ATP is bound by residues Lys204, Glu326, and 352-355 (GGDT).

This sequence belongs to the phosphoglycerate kinase family. Monomer.

The protein resides in the cytoplasm. The catalysed reaction is (2R)-3-phosphoglycerate + ATP = (2R)-3-phospho-glyceroyl phosphate + ADP. Its pathway is carbohydrate degradation; glycolysis; pyruvate from D-glyceraldehyde 3-phosphate: step 2/5. The sequence is that of Phosphoglycerate kinase from Pelobacter propionicus (strain DSM 2379 / NBRC 103807 / OttBd1).